Reading from the N-terminus, the 892-residue chain is Protein translocase subunit SecA (892 aa).

Residues Gln89, 107–111 (GEGKT), and Asp517 contribute to the ATP site. Cys879, Cys881, Cys890, and His891 together coordinate Zn(2+).

The protein belongs to the SecA family. Monomer and homodimer. Part of the essential Sec protein translocation apparatus which comprises SecA, SecYEG and auxiliary proteins SecDF-YajC and YidC. Zn(2+) serves as cofactor.

It is found in the cell inner membrane. It localises to the cytoplasm. The enzyme catalyses ATP + H2O + cellular proteinSide 1 = ADP + phosphate + cellular proteinSide 2.. In terms of biological role, part of the Sec protein translocase complex. Interacts with the SecYEG preprotein conducting channel. Has a central role in coupling the hydrolysis of ATP to the transfer of proteins into and across the cell membrane, serving as an ATP-driven molecular motor driving the stepwise translocation of polypeptide chains across the membrane. The sequence is that of Protein translocase subunit SecA from Ruthia magnifica subsp. Calyptogena magnifica.